Consider the following 214-residue polypeptide: Adenylate kinase (214 aa).

10–15 (GTGKGT) is a binding site for ATP. Residues 30–59 (STGDILRENIQKKNTIGKKIHNILKNGELV) form an NMP region. Residues Thr31, Arg36, 57–59 (ELV), 85–88 (GFPR), and Gln92 each bind AMP. An LID region spans residues 122–159 (GRRVHTPSGRIYNINYNPPREEGKDDLTQEKLTIREDD). ATP is bound by residues Arg123 and 132–133 (IY). Positions 156 and 167 each coordinate AMP. Gln200 provides a ligand contact to ATP.

This sequence belongs to the adenylate kinase family. As to quaternary structure, monomer.

The protein resides in the cytoplasm. The enzyme catalyses AMP + ATP = 2 ADP. It participates in purine metabolism; AMP biosynthesis via salvage pathway; AMP from ADP: step 1/1. Catalyzes the reversible transfer of the terminal phosphate group between ATP and AMP. Plays an important role in cellular energy homeostasis and in adenine nucleotide metabolism. The sequence is that of Adenylate kinase from Buchnera aphidicola subsp. Schizaphis graminum (strain Sg).